Consider the following 305-residue polypeptide: Olfactory receptor 4F4 (305 aa).

The Extracellular portion of the chain corresponds to 1–18 (MVTEFIFLGLSDSQELQT). A helical transmembrane segment spans residues 19-42 (FLFMLFFVFYGGIVFGNLLIVITV). At 43–50 (VSDSHLHS) the chain is on the cytoplasmic side. A helical membrane pass occupies residues 51–72 (PMYFLLANLSLIDLSLSSVTAP). Over 73–93 (KMITDFFSQRKVISFKGCLVQ) the chain is Extracellular. A disulfide bridge links Cys-90 with Cys-182. A helical membrane pass occupies residues 94–113 (IFLLHFFGGSEMVILIAMGF). Residues 114 to 132 (DRYIAICKPLHYTTIMCGN) are Cytoplasmic-facing. The helical transmembrane segment at 133–151 (ACVGIMAVAWGIGFLHSVS) threads the bilayer. At 152-188 (QLAFAVHLPFCGPNEVDSFYCDLPRVIKLACTDTYRL) the chain is on the extracellular side. The helical transmembrane segment at 189–212 (DIMVIANSGVLTVCSFVLLIISYT) threads the bilayer. Over 213–228 (IILMTIQHCPLDKSSK) the chain is Cytoplasmic. Residues 229-251 (ALSTLTAHITVVLLFFGPCVFIY) traverse the membrane as a helical segment. Residues 252-262 (AWPFPIKSLDK) lie on the Extracellular side of the membrane. Residues 263 to 282 (FLAVFYSVITPLLNPIIYTL) traverse the membrane as a helical segment. At 283 to 305 (RNKDMKTAIRRLRKWDAHSSVKF) the chain is on the cytoplasmic side.

The protein belongs to the G-protein coupled receptor 1 family.

It is found in the cell membrane. Functionally, odorant receptor. The polypeptide is Olfactory receptor 4F4 (OR4F4) (Homo sapiens (Human)).